The sequence spans 1522 residues: Myosin-15 (1522 aa).

In terms of domain architecture, Myosin N-terminal SH3-like spans 12 to 61 (RKGDKVWVEDKDLAWIAADVLDSFDNKLHVETSTGKKVFVSPEKLFRRDP). In terms of domain architecture, Myosin motor spans 67–737 (NGVDDMTKLT…QIGILDSRRA (671 aa)). Residues 161-168 (GESGAGKT) and 214-222 (NDNSSRFGK) each bind ATP. Actin-binding regions lie at residues 499–533 (LIEK…FQNF), 535–558 (FHPR…AGKV), 593–618 (FPSA…KQQL), and 618–640 (LQAL…KPNS). IQ domains are found at residues 763–792 (ARAS…AAAA), 788–817 (NAAA…AAIV), 811–840 (LVSA…HRAA), 836–865 (EHRA…SIIA), and 859–888 (RQSS…VANE). Positions 889-1059 (AGALRLAKTK…NQVLMQKTLI (171 aa)) form a coiled coil. Residues 1164-1456 (NIIIEGINEA…VSQMRVLVDK (293 aa)) form the Dilute domain.

The protein belongs to the TRAFAC class myosin-kinesin ATPase superfamily. Myosin family. Plant myosin class XI subfamily. In terms of assembly, homodimer. Interacts with MYOB1 and MYOB7. Interacts with WIT1 and WIT2. Core component of the LINC complex which is composed of inner nuclear membrane SUN domain-containing proteins coupled to outer nuclear membrane WIP and WIT proteins. The LINC complex also involves nucleoskeletal proteins CRWN/LINC and possibly KAKU4 and the cytoskeletal myosin KAKU1.

Its subcellular location is the cytoplasm. The protein localises to the nucleus membrane. In terms of biological role, myosin heavy chain that is required for the cell cycle-regulated transport of various organelles and proteins for their segregation. Functions by binding with its tail domain to receptor proteins on organelles and exerting force with its N-terminal motor domain against actin filaments, thereby transporting its cargo along polarized actin cables. Involved in trafficking of Golgi stacks and mitochondria. Plays a role in nuclear shape determination. Drives nuclear movement along actin filaments. As component of the SUN-WIP-WIT2-KAKU1 complex, mediates the transfer of cytoplasmic forces to the nuclear envelope (NE), leading to nuclear shape changes. This is Myosin-15 (XI-I) from Arabidopsis thaliana (Mouse-ear cress).